Consider the following 746-residue polypeptide: H(+)/Cl(-) exchange transporter 5 (746 aa).

At 1–54 (MDFLEEPIPGVGTYDDFNTIDWVREKSRDRDRHREITNRSKESTWALIHSVSDA) the chain is on the cytoplasmic side. 2 consecutive transmembrane segments (helical) span residues 55 to 92 (FSGW…ICTE) and 138 to 161 (VNYF…VKVF). The Selectivity filter part_1 signature appears at 167–171 (GSGIP). Position 168 (Ser-168) interacts with chloride. The segment at residues 170-177 (IPEIKTIL) is an intramembrane region (helical). 2 helical membrane passes run 186–205 (LGKW…VSSG) and 211–230 (EGPL…HCFN). The short motif at 209 to 213 (GKEGP) is the Selectivity filter part_2 element. Intramembrane regions (helical) lie at residues 242–254 (VLSA…VSVA) and 258–266 (PIGGVLFSL). 5 helical membrane passes run 278–296 (LWRS…RSIN), 319–344 (LVPF…IAWC), 352–372 (LGKY…ILAF), 428–448 (MWQL…TFGM), and 453–472 (GLFI…LGVG). Positions 453–457 (GLFIP) match the Selectivity filter part_3 motif. Phe-455 contributes to the chloride binding site. Residues 500-514 (GLYAMVGAAACLGGV) constitute an intramembrane region (helical). An intramembrane region (note=Loop between two helices) is located at residues 515–517 (TRM). The segment at residues 518–529 (TVSLVVIMFELT) is an intramembrane region (helical). The note=Loop between two helices intramembrane region spans 530 to 534 (GGLEY). The helical transmembrane segment at 535–552 (IVPLMAAAMTSKWVADAL) threads the bilayer. Topologically, residues 553–746 (GREGIYDAHI…NQDPDSILFN (194 aa)) are cytoplasmic. Tyr-558 contributes to the chloride binding site. 2 consecutive CBS domains span residues 586–650 (MKPR…ARKE) and 682–742 (ILDL…DPDS). Residues Thr-596, 617–619 (YSG), and 724–727 (TKKD) contribute to the ATP site.

The protein belongs to the chloride channel (TC 2.A.49) family. ClC-5/CLCN5 subfamily. Interacts with NEDD4 and NEDD4L. Ubiquitinated by NEDD4L in the presence of albumin; which promotes endocytosis and proteasomal degradation. As to expression, detected in duodenum, jejunum and ileum. Detected in crypt and villus regions of the epithelium of the small intestine.

Its subcellular location is the golgi apparatus membrane. It is found in the endosome membrane. The protein resides in the cell membrane. It carries out the reaction 2 chloride(in) + H(+)(out) = 2 chloride(out) + H(+)(in). In terms of biological role, proton-coupled chloride transporter. Functions as antiport system and exchanges chloride ions against protons. Important for normal acidification of the endosome lumen. May play an important role in renal tubular function. The CLC channel family contains both chloride channels and proton-coupled anion transporters that exchange chloride or another anion for protons. The absence of conserved gating glutamate residues is typical for family members that function as channels. This chain is H(+)/Cl(-) exchange transporter 5 (CLCN5), found in Cavia porcellus (Guinea pig).